Reading from the N-terminus, the 293-residue chain is Excinuclease cho (293 aa).

Residues alanine 33–lysine 108 form the GIY-YIG domain.

Its function is as follows. Incises the DNA at the 3' side of a lesion during nucleotide excision repair. Incises the DNA farther away from the lesion than UvrC. Not able to incise the 5' site of a lesion. When a lesion remains because UvrC is not able to induce the 3' incision, Cho incises the DNA. Then UvrC makes the 5' incision. The combined action of Cho and UvrC broadens the substrate range of nucleotide excision repair. This chain is Excinuclease cho (cho), found in Salmonella typhimurium (strain LT2 / SGSC1412 / ATCC 700720).